We begin with the raw amino-acid sequence, 1282 residues long: Autophagy-related protein 11 (1282 aa).

Coiled coils occupy residues 579-641 (VANE…QQYK), 722-799 (KHLD…ELQA), and 834-917 (DVNE…HNNL). Residues 586 to 609 (NDKLLANSKDENNDKQAEGGGHMS) are disordered. Residues 593-602 (SKDENNDKQA) show a composition bias toward basic and acidic residues.

Belongs to the ATG11 family. Homodimer.

Its subcellular location is the preautophagosomal structure membrane. It is found in the vacuole membrane. In terms of biological role, involved in cytoplasm to vacuole transport (Cvt), pexophagy, mitophagy and nucleophagy. Recruits mitochondria for their selective degradation via autophagy (mitophagy) during starvation. Works as scaffold proteins that recruit ATG proteins to the pre-autophagosome (PAS), the site of vesicle/autophagosome formation. Required for the Cvt vesicles completion. The protein is Autophagy-related protein 11 (ATG11) of Debaryomyces hansenii (strain ATCC 36239 / CBS 767 / BCRC 21394 / JCM 1990 / NBRC 0083 / IGC 2968) (Yeast).